Consider the following 469-residue polypeptide: MYTYMEYLQKCFYKSTNWNEDNIFSNITASSSAILDFPIPTGFKLDSSNKSTEYSASSFTLSNYHSINGSLAYLYSSVPLRNTMGTKEISLQDALVGFRIIEPSSNNHKQLSSSKRHDRSSLLYGRMYFPGSALEAMIIKRISAHTQLLIKCINNPHMDKNGTMIVYLQKNAPKYSREFIYSTNESLIGFRCLYNLGNSDNSLNTALIPKFDNSVISIGTELWYAARTMSPGLSTAFRYSTRSTSTGKPLTMTLAVNPILGHLSSTYTVKTSVASTFSSRYDFNFFSYASNLSLGFELYNYSRENPVHSFANRSVNLSSEENRFLSHQDRKVRGQHGGNTIPIRSHTSIAQKDHSNMIINPIQNLDNYYHINPTLLPEKKKLLDEVELAAHLSSENSESVTTAFQNLVNESDFASVVKFSTSLNDRMVKILWEGRVKDFLVSTGVKVGMNPVTNAPEFNRFGVSFSYAC.

The protein belongs to the MDM10 family. In terms of assembly, component of the ER-mitochondria encounter structure (ERMES) or MDM complex, composed of MMM1, MDM10, MDM12 and MDM34. Associates with the mitochondrial outer membrane sorting assembly machinery SAM(core) complex.

Its subcellular location is the mitochondrion outer membrane. Its function is as follows. Component of the ERMES/MDM complex, which serves as a molecular tether to connect the endoplasmic reticulum and mitochondria. Components of this complex are involved in the control of mitochondrial shape and protein biogenesis and may function in phospholipid exchange. MDM10 is involved in the late assembly steps of the general translocase of the mitochondrial outer membrane (TOM complex). Functions in the TOM40-specific route of the assembly of outer membrane beta-barrel proteins, including the association of TOM40 with the receptor TOM22 and small TOM proteins. Can associate with the SAM(core) complex as well as the MDM12-MMM1 complex, both involved in late steps of the major beta-barrel assembly pathway, that is responsible for biogenesis of all outer membrane beta-barrel proteins. May act as a switch that shuttles between both complexes and channels precursor proteins into the TOM40-specific pathway. Plays a role in mitochondrial morphology and in the inheritance of mitochondria. The chain is Mitochondrial distribution and morphology protein 10 from Scheffersomyces stipitis (strain ATCC 58785 / CBS 6054 / NBRC 10063 / NRRL Y-11545) (Yeast).